Consider the following 238-residue polypeptide: Gas vesicle protein F (238 aa).

This sequence belongs to the gas vesicle GvpF/GvpL family. Binds GvpA.

It localises to the gas vesicle. A minor component of the gas vesicle, may be involved in preventing GvpA aggregation during gas vesicle nucleation. Gas vesicles are hollow, gas filled proteinaceous nanostructures found in some microorganisms. It is not clear what function gas vesicles perform in soil bacteria. The sequence is that of Gas vesicle protein F from Streptomyces sp. (strain CB03234).